The following is a 256-amino-acid chain: MNNIWWQTKGQGNVHLVLLHGWGLNAEVWRCIDEELSSHFTLHLVDLPGFGRSRGFGALSLADMAEAVLQQAPDKAIWLGWSLGGLVASQIALTHPERVQALVTVASSPCFSARDEWPGIKPDVLAGFQQQLSDDFQRTVERFLALQTMGTETARQDARALKKTVLALPMPEVDVLNGGLEILKTVDLRQPLQNVSMPFLRLYGYLDGLVPRKVVPMLDKLWPHSESYIFAKAAHAPFISHPAEFCHLLVALKQRV.

Residues 15 to 242 enclose the AB hydrolase-1 domain; that stretch reads HLVLLHGWGL…AAHAPFISHP (228 aa). Residues Trp-22, 82–83, and 143–147 each bind substrate; these read SL and FLALQ. Ser-82 acts as the Nucleophile in catalysis. Catalysis depends on residues Asp-207 and His-235. Substrate is bound at residue His-235.

This sequence belongs to the AB hydrolase superfamily. Carboxylesterase BioH family. As to quaternary structure, monomer.

Its subcellular location is the cytoplasm. The catalysed reaction is 6-carboxyhexanoyl-[ACP] methyl ester + H2O = 6-carboxyhexanoyl-[ACP] + methanol + H(+). It functions in the pathway cofactor biosynthesis; biotin biosynthesis. Its function is as follows. The physiological role of BioH is to remove the methyl group introduced by BioC when the pimeloyl moiety is complete. It allows to synthesize pimeloyl-ACP via the fatty acid synthetic pathway through the hydrolysis of the ester bonds of pimeloyl-ACP esters. This is Pimeloyl-[acyl-carrier protein] methyl ester esterase from Escherichia coli (strain K12 / MC4100 / BW2952).